A 466-amino-acid polypeptide reads, in one-letter code: Bifunctional protein GlmU (466 aa).

The tract at residues 1–236 is pyrophosphorylase; the sequence is MEVMPQPLTI…PAEALGINDR (236 aa). UDP-N-acetyl-alpha-D-glucosamine is bound by residues 13–16, lysine 27, glutamine 79, 84–85, 107–109, glycine 146, glutamate 161, asparagine 176, and asparagine 234; these read LAAG, GT, and YGD. Residue aspartate 109 participates in Mg(2+) binding. Asparagine 234 contributes to the Mg(2+) binding site. The linker stretch occupies residues 237–257; it reads AQLAEVDRIFRDRKRRAVMAA. Residues 258–466 are N-acetyltransferase; sequence GVTLIQPETI…AKKRRKLAKT (209 aa). UDP-N-acetyl-alpha-D-glucosamine contacts are provided by arginine 340 and lysine 358. Histidine 370 serves as the catalytic Proton acceptor. Tyrosine 373 and asparagine 384 together coordinate UDP-N-acetyl-alpha-D-glucosamine. Acetyl-CoA-binding positions include alanine 387, 393–394, serine 412, alanine 430, and arginine 447; that span reads NY.

In the N-terminal section; belongs to the N-acetylglucosamine-1-phosphate uridyltransferase family. It in the C-terminal section; belongs to the transferase hexapeptide repeat family. Homotrimer. Mg(2+) is required as a cofactor.

The protein localises to the cytoplasm. The enzyme catalyses alpha-D-glucosamine 1-phosphate + acetyl-CoA = N-acetyl-alpha-D-glucosamine 1-phosphate + CoA + H(+). It catalyses the reaction N-acetyl-alpha-D-glucosamine 1-phosphate + UTP + H(+) = UDP-N-acetyl-alpha-D-glucosamine + diphosphate. It participates in nucleotide-sugar biosynthesis; UDP-N-acetyl-alpha-D-glucosamine biosynthesis; N-acetyl-alpha-D-glucosamine 1-phosphate from alpha-D-glucosamine 6-phosphate (route II): step 2/2. It functions in the pathway nucleotide-sugar biosynthesis; UDP-N-acetyl-alpha-D-glucosamine biosynthesis; UDP-N-acetyl-alpha-D-glucosamine from N-acetyl-alpha-D-glucosamine 1-phosphate: step 1/1. The protein operates within bacterial outer membrane biogenesis; LPS lipid A biosynthesis. Its function is as follows. Catalyzes the last two sequential reactions in the de novo biosynthetic pathway for UDP-N-acetylglucosamine (UDP-GlcNAc). The C-terminal domain catalyzes the transfer of acetyl group from acetyl coenzyme A to glucosamine-1-phosphate (GlcN-1-P) to produce N-acetylglucosamine-1-phosphate (GlcNAc-1-P), which is converted into UDP-GlcNAc by the transfer of uridine 5-monophosphate (from uridine 5-triphosphate), a reaction catalyzed by the N-terminal domain. The sequence is that of Bifunctional protein GlmU from Solibacter usitatus (strain Ellin6076).